Reading from the N-terminus, the 953-residue chain is Isoleucine--tRNA ligase (953 aa).

Residues 58–68 carry the 'HIGH' region motif; it reads PYANGNIHLGH. Glu-565 is a binding site for L-isoleucyl-5'-AMP. The short motif at 606–610 is the 'KMSKS' region element; the sequence is KMSKS. Residue Lys-609 coordinates ATP. Zn(2+) contacts are provided by Cys-916, Cys-919, Cys-936, and Cys-939.

The protein belongs to the class-I aminoacyl-tRNA synthetase family. IleS type 1 subfamily. As to quaternary structure, monomer. Zn(2+) is required as a cofactor.

It localises to the cytoplasm. It catalyses the reaction tRNA(Ile) + L-isoleucine + ATP = L-isoleucyl-tRNA(Ile) + AMP + diphosphate. Its function is as follows. Catalyzes the attachment of isoleucine to tRNA(Ile). As IleRS can inadvertently accommodate and process structurally similar amino acids such as valine, to avoid such errors it has two additional distinct tRNA(Ile)-dependent editing activities. One activity is designated as 'pretransfer' editing and involves the hydrolysis of activated Val-AMP. The other activity is designated 'posttransfer' editing and involves deacylation of mischarged Val-tRNA(Ile). In Colwellia psychrerythraea (strain 34H / ATCC BAA-681) (Vibrio psychroerythus), this protein is Isoleucine--tRNA ligase.